The primary structure comprises 477 residues: Diphthine methyltransferase (477 aa).

WD repeat units follow at residues H194–F232, R236–A276, and V422–L464.

It belongs to the DPH7 family. Interacts with INCA1.

It catalyses the reaction diphthine methyl ester-[translation elongation factor 2] + H2O = diphthine-[translation elongation factor 2] + methanol + H(+). Its pathway is protein modification; peptidyl-diphthamide biosynthesis. Its function is as follows. Catalyzes the demethylation of diphthine methyl ester to form diphthine, an intermediate diphthamide biosynthesis, a post-translational modification of histidine which occurs in translation elongation factor 2 (EEF2). The chain is Diphthine methyltransferase (Dph7) from Mus musculus (Mouse).